We begin with the raw amino-acid sequence, 305 residues long: Porphobilinogen deaminase (305 aa).

Residue cysteine 240 is modified to S-(dipyrrolylmethanemethyl)cysteine.

Belongs to the HMBS family. As to quaternary structure, monomer. It depends on dipyrromethane as a cofactor.

It catalyses the reaction 4 porphobilinogen + H2O = hydroxymethylbilane + 4 NH4(+). Its pathway is porphyrin-containing compound metabolism; protoporphyrin-IX biosynthesis; coproporphyrinogen-III from 5-aminolevulinate: step 2/4. Functionally, tetrapolymerization of the monopyrrole PBG into the hydroxymethylbilane pre-uroporphyrinogen in several discrete steps. This Xylella fastidiosa (strain 9a5c) protein is Porphobilinogen deaminase (hemC).